The primary structure comprises 277 residues: Putative glucose-6-phosphate/phosphate-translocator-like protein 1 (277 aa).

Transmembrane regions (helical) follow at residues 8–28 (VLPSLTAIVGIGIYFAIWWAL), 46–66 (LWLTLTLSLACGSLMMLVSWV), 124–143 (MIGFMGAMISNLAFVFRNIF), 153–173 (VSVMNYYACLSMMSLLIVTPF), and 230–250 (PLKHVNALGAAIAILGTFIYS).

This sequence belongs to the TPT transporter family. GPT (TC 2.A.7.9) subfamily.

The protein localises to the membrane. This is Putative glucose-6-phosphate/phosphate-translocator-like protein 1 from Arabidopsis thaliana (Mouse-ear cress).